A 92-amino-acid chain; its full sequence is MATTLEEFSAKLDRLDAEFAKKMEEQNKKFFADKPDESTLSPEMKEHYEKFEKMIQEHTDKFNKKMHEHSEHFKAKFAELLEQQKNAQFPGK.

This sequence belongs to the KMP-11 family. As to quaternary structure, monomer.

The protein resides in the cytoplasm. It is found in the cytoskeleton. Its function is as follows. May be involved in the regulation of the cytoskeleton through interaction with the subpellicular microtubules. May be involved in parasite mobility and attachment to the surface of the host cell. Behaves as a strong immunogen during infection. The sequence is that of Kinetoplastid membrane protein 11 (KMP-11) from Trypanosoma cruzi.